The following is a 545-amino-acid chain: MTRLTQSDTWQALSTHTQSLPHMRDLFEGDAQRFKTMSTSACGLFLDYSKNRATEETLSLLFKLAEDAQLQSKIAGMFNGEIINTTEKRAVLHTALRASPEQEILLDGVNIVQEVQETQQKMAEFVNAITSGQWKGYTGKRITDVVSIGIGGSFLGPKIVSQALRPYWTGELNCHFVANVDATSICEKLKTLDAETTLFIMSSKSFGTQETLTNTLSAKDWFLKQGGSQLDVAKHFVAVTSNVPKATEFGIDAENIFPMWDWVGGRYSLWSAIGLPIALLIGMDNFKALLQGAHEMDKHFLEAPLTENMPVIMGLFSLLYGNFHGAQSHVVLTYDHYLRGLPAYFQQLDMESNGKSVTLDGTDVDFSTGPVIWGGEGTNGQHAYHQLIHQGTALIPADFIMPLQSHNPLGEHHIQLASNCFGQTQALMQGRNYDEALNELSGSKLSADEQALIAKHKVMPGNKPSNTILMDKLTPSTLGSLIALYEHRTFVQGAIWDINSFDQWGVELGKSLGNDVLERLSADSDATSLDSSSNGLINMFRQGKI.

Residue Glu351 is the Proton donor of the active site. Catalysis depends on residues His382 and Lys510.

It belongs to the GPI family.

The protein localises to the cytoplasm. The enzyme catalyses alpha-D-glucose 6-phosphate = beta-D-fructose 6-phosphate. It functions in the pathway carbohydrate biosynthesis; gluconeogenesis. Its pathway is carbohydrate degradation; glycolysis; D-glyceraldehyde 3-phosphate and glycerone phosphate from D-glucose: step 2/4. Functionally, catalyzes the reversible isomerization of glucose-6-phosphate to fructose-6-phosphate. The sequence is that of Glucose-6-phosphate isomerase from Shewanella woodyi (strain ATCC 51908 / MS32).